A 325-amino-acid polypeptide reads, in one-letter code: Metacaspase-9 (325 aa).

Residues H95 and C147 contribute to the active site. An S-nitrosocysteine modification is found at C147. N-linked (GlcNAc...) asparagine glycosylation occurs at N177.

The protein belongs to the peptidase C14B family. Post-translationally, the two subunits are derived from the precursor sequence by an autocatalytic mechanism. In terms of processing, S-nitrosylation at Cys-147 suppresses both autoprocessing and proteolytic activity of the full-length protein, but does not affect the activity of the mature processed form. As to expression, expressed in root tips, cauline leaves, flowers and siliques.

It is found in the secreted. It localises to the extracellular space. Its subcellular location is the apoplast. Inhibited by serpin ZX and nitric oxide through cysteine nitrosylation. Cysteine protease that cleaves specifically after arginine or lysine residues. Does not cleave caspase-specific substrates. Required for proteolytic processing of GRI. The polypeptide is Metacaspase-9 (AMC9) (Arabidopsis thaliana (Mouse-ear cress)).